We begin with the raw amino-acid sequence, 116 residues long: U16-barytoxin-Tl1a (116 aa).

The signal sequence occupies residues 1–20; it reads MKTIIVFLSLLVLATKFGDA. Residues 21-74 constitute a propeptide that is removed on maturation; that stretch reads KEGVNQEQKKEVTQNEFRVEYLNEMAAMSLLQQLEAIESALFEKEAGRNSRQKR. 3 disulfide bridges follow: Cys-75–Cys-90, Cys-82–Cys-95, and Cys-89–Cys-110.

The protein belongs to the neurotoxin 14 (magi-1) family. 06 (ICK-Trit) subfamily. In terms of tissue distribution, expressed by the venom gland.

The protein localises to the secreted. Its function is as follows. Ion channel inhibitor. This chain is U16-barytoxin-Tl1a, found in Trittame loki (Brush-footed trapdoor spider).